Here is an 89-residue protein sequence, read N- to C-terminus: MAHKKGVGSSKNGRESQSKRLGVKIFGGEACKAGNIIVRQRGTEFHPGENIGMGKDHTLFALVDGTVNFKVGREDRRYVSIIPAEATEA.

The protein belongs to the bacterial ribosomal protein bL27 family.

In Bacteroides fragilis (strain ATCC 25285 / DSM 2151 / CCUG 4856 / JCM 11019 / LMG 10263 / NCTC 9343 / Onslow / VPI 2553 / EN-2), this protein is Large ribosomal subunit protein bL27.